Here is a 169-residue protein sequence, read N- to C-terminus: S-ribosylhomocysteine lyase (169 aa).

3 residues coordinate Fe cation: H54, H58, and C129.

The protein belongs to the LuxS family. Homodimer. Fe cation serves as cofactor.

The catalysed reaction is S-(5-deoxy-D-ribos-5-yl)-L-homocysteine = (S)-4,5-dihydroxypentane-2,3-dione + L-homocysteine. Its function is as follows. Involved in the synthesis of autoinducer 2 (AI-2) which is secreted by bacteria and is used to communicate both the cell density and the metabolic potential of the environment. The regulation of gene expression in response to changes in cell density is called quorum sensing. Catalyzes the transformation of S-ribosylhomocysteine (RHC) to homocysteine (HC) and 4,5-dihydroxy-2,3-pentadione (DPD). The sequence is that of S-ribosylhomocysteine lyase from Actinobacillus pleuropneumoniae serotype 5b (strain L20).